The primary structure comprises 884 residues: Alanine--tRNA ligase (884 aa).

Positions 565, 569, 675, and 679 each coordinate Zn(2+).

It belongs to the class-II aminoacyl-tRNA synthetase family. Requires Zn(2+) as cofactor.

It is found in the cytoplasm. The enzyme catalyses tRNA(Ala) + L-alanine + ATP = L-alanyl-tRNA(Ala) + AMP + diphosphate. Its function is as follows. Catalyzes the attachment of alanine to tRNA(Ala) in a two-step reaction: alanine is first activated by ATP to form Ala-AMP and then transferred to the acceptor end of tRNA(Ala). Also edits incorrectly charged Ser-tRNA(Ala) and Gly-tRNA(Ala) via its editing domain. This is Alanine--tRNA ligase from Maricaulis maris (strain MCS10) (Caulobacter maris).